Here is a 118-residue protein sequence, read N- to C-terminus: Ribosome-binding factor A (118 aa).

The protein belongs to the RbfA family. In terms of assembly, monomer. Binds 30S ribosomal subunits, but not 50S ribosomal subunits or 70S ribosomes.

The protein resides in the cytoplasm. In terms of biological role, one of several proteins that assist in the late maturation steps of the functional core of the 30S ribosomal subunit. Associates with free 30S ribosomal subunits (but not with 30S subunits that are part of 70S ribosomes or polysomes). Required for efficient processing of 16S rRNA. May interact with the 5'-terminal helix region of 16S rRNA. The sequence is that of Ribosome-binding factor A from Bacillus thuringiensis (strain Al Hakam).